The primary structure comprises 86 residues: Ferredoxin-like protein YgcO (86 aa).

Positions 45-74 (GNLRIDYRSCLECGTCRLLCDESTLQQWRY) constitute a 4Fe-4S ferredoxin-type domain.

This sequence belongs to the bacterial-type ferredoxin family. FixX subfamily.

In terms of biological role, could be a 3Fe-4S cluster-containing protein. Probably participates in a redox process with YgcN, YgcQ and YgcR. The sequence is that of Ferredoxin-like protein YgcO (ygcO) from Escherichia coli (strain K12).